Consider the following 410-residue polypeptide: Polyprenol-phosphate-mannose-dependent alpha-(1-2)-phosphatidylinositol pentamannoside mannosyltransferase (410 aa).

10 helical membrane passes run 31–51, 96–116, 160–180, 188–208, 214–234, 276–296, 306–326, 328–348, 351–371, and 384–404; these read LAPM…YLVP, FAAI…AFIW, TFDY…AVST, LLVG…LYFL, AAVA…WLVV, GFGP…LLAW, LGGI…SWTH, WVWL…ALRG, ILGW…LSFA, and LAWA…WIAF.

This sequence belongs to the glycosyltransferase 87 family.

Its subcellular location is the cell membrane. It participates in phospholipid metabolism; phosphatidylinositol metabolism. Its function is as follows. Catalyzes the alpha-1,2 addition of a mannose residue from polyprenol-phosphate-mannose (PPM) to a monoacyl phosphatidylinositol tetramannoside (AcPIM4) to generate a monoacyl phosphatidylinositol pentamannoside (AcPIM5). This chain is Polyprenol-phosphate-mannose-dependent alpha-(1-2)-phosphatidylinositol pentamannoside mannosyltransferase, found in Mycolicibacterium smegmatis (strain ATCC 700084 / mc(2)155) (Mycobacterium smegmatis).